A 91-amino-acid polypeptide reads, in one-letter code: UPF0250 protein PputGB1_4855 (91 aa).

It belongs to the UPF0250 family.

The sequence is that of UPF0250 protein PputGB1_4855 from Pseudomonas putida (strain GB-1).